The chain runs to 635 residues: 1-deoxy-D-xylulose-5-phosphate synthase (635 aa).

Residues His74 and 115 to 117 (GHA) each bind thiamine diphosphate. A Mg(2+)-binding site is contributed by Asp146. Thiamine diphosphate is bound by residues 147–148 (GA), Asn175, Tyr285, and Glu367. Asn175 provides a ligand contact to Mg(2+).

This sequence belongs to the transketolase family. DXPS subfamily. As to quaternary structure, homodimer. The cofactor is Mg(2+). It depends on thiamine diphosphate as a cofactor.

The catalysed reaction is D-glyceraldehyde 3-phosphate + pyruvate + H(+) = 1-deoxy-D-xylulose 5-phosphate + CO2. It functions in the pathway metabolic intermediate biosynthesis; 1-deoxy-D-xylulose 5-phosphate biosynthesis; 1-deoxy-D-xylulose 5-phosphate from D-glyceraldehyde 3-phosphate and pyruvate: step 1/1. In terms of biological role, catalyzes the acyloin condensation reaction between C atoms 2 and 3 of pyruvate and glyceraldehyde 3-phosphate to yield 1-deoxy-D-xylulose-5-phosphate (DXP). This chain is 1-deoxy-D-xylulose-5-phosphate synthase, found in Anaeromyxobacter sp. (strain Fw109-5).